Reading from the N-terminus, the 238-residue chain is Transcriptional repressor ThaA (238 aa).

The 66-residue stretch at 169-234 (IPGEIARVSL…HAAVKATLVG (66 aa)) folds into the HTH luxR-type domain. The H-T-H motif DNA-binding region spans 193-212 (VSEISSILQMSVRNINFHIQ).

The protein belongs to the autoinducer-regulated transcriptional regulatory protein family.

Represses thailandamide production. The sequence is that of Transcriptional repressor ThaA from Burkholderia thailandensis (strain ATCC 700388 / DSM 13276 / CCUG 48851 / CIP 106301 / E264).